We begin with the raw amino-acid sequence, 835 residues long: Leucine--tRNA ligase (835 aa).

The 'HIGH' region signature appears at 41 to 52 (PYPSGQGLHVGH). Positions 611–615 (KMSKS) match the 'KMSKS' region motif. Lysine 614 serves as a coordination point for ATP.

This sequence belongs to the class-I aminoacyl-tRNA synthetase family.

It localises to the cytoplasm. It catalyses the reaction tRNA(Leu) + L-leucine + ATP = L-leucyl-tRNA(Leu) + AMP + diphosphate. The polypeptide is Leucine--tRNA ligase (Elusimicrobium minutum (strain Pei191)).